A 141-amino-acid polypeptide reads, in one-letter code: Ubiquitin-like protein ATG12 (141 aa).

A disordered region spans residues M1 to K53. Residues L23–A40 are compositionally biased toward low complexity. G141 participates in a covalent cross-link: Glycyl lysine isopeptide (Gly-Lys) (interchain with K-? in acceptor protein).

The protein belongs to the ATG12 family. As to quaternary structure, forms a conjugate with ATG5. Part of the minor complex composed of 4 sets of ATG12-ATG5 and ATG16L1 (400 kDa); this complex interacts with ATG3 leading to disruption of ATG7 interaction and promotion of ATG8-like proteins lipidation. Forms an 800-kDa complex composed of ATG12-ATG5 and ATG16L2. Interacts with DHX58/RIG-1, IFIH1/MDA5 and MAVS/IPS-1 in monomeric form as well as in ATG12-ATG5 conjugate. The interaction with MAVS is further enhanced upon vesicular stomatitis virus (VSV) infection. Interacts with ATG3; this interaction is essential for phosphatidylethanolamine (PE)-conjugated ATG8-like proteins formation. Interacts with ATG7. Interacts with ATG10. The ATG12-ATG5 conjugate interacts with RAB33A; this interaction is bridged by ATG16L1 and promotes ATG12-ATG5-ATG16L1 complex recruitment to phagophores. Interacts with TECPR1. Interacts with SH3BGRL. The ATG12-ATG5 conjugate interacts with PDCD6IP (via the BRO1 domain); this interaction is bridged by ATG12 and promotes multiple PDCD6IP-mediated functions such as endolysosomal trafficking, macroautophagy and exosome biogenesis. Post-translationally, acetylated by EP300. In terms of tissue distribution, ubiquitous.

Its subcellular location is the cytoplasm. It localises to the preautophagosomal structure membrane. Its function is as follows. Ubiquitin-like protein involved in autophagy vesicles formation. Conjugation with ATG5 through a ubiquitin-like conjugating system involving also ATG7 as an E1-like activating enzyme and ATG10 as an E2-like conjugating enzyme, is essential for its function. The ATG12-ATG5 conjugate acts as an E3-like enzyme which is required for lipidation of ATG8 family proteins and their association to the vesicle membranes. As part of the ATG8 conjugation system with ATG5 and ATG16L1, required for recruitment of LRRK2 to stressed lysosomes and induction of LRRK2 kinase activity in response to lysosomal stress. In terms of biological role, (Microbial infection) May act as a proviral factor. In association with ATG5, negatively regulates the innate antiviral immune response by impairing the type I IFN production pathway upon vesicular stomatitis virus (VSV) infection. The protein is Ubiquitin-like protein ATG12 of Mus musculus (Mouse).